Here is a 124-residue protein sequence, read N- to C-terminus: Small ribosomal subunit protein bS6 (124 aa).

The interval 97–124 is disordered; that stretch reads TGPSPMMKEVQREEAKKAAAAQPTEAQA. Over residues 114–124 the composition is skewed to low complexity; the sequence is AAAAQPTEAQA.

Belongs to the bacterial ribosomal protein bS6 family.

Functionally, binds together with bS18 to 16S ribosomal RNA. This is Small ribosomal subunit protein bS6 from Paraburkholderia phymatum (strain DSM 17167 / CIP 108236 / LMG 21445 / STM815) (Burkholderia phymatum).